A 366-amino-acid chain; its full sequence is tRNA/tmRNA (uracil-C(5))-methyltransferase (366 aa).

Residues Q190, Y218, N223, E239, and D299 each coordinate S-adenosyl-L-methionine. C324 (nucleophile) is an active-site residue. E358 (proton acceptor) is an active-site residue.

The protein belongs to the class I-like SAM-binding methyltransferase superfamily. RNA M5U methyltransferase family. TrmA subfamily.

It carries out the reaction uridine(54) in tRNA + S-adenosyl-L-methionine = 5-methyluridine(54) in tRNA + S-adenosyl-L-homocysteine + H(+). The catalysed reaction is uridine(341) in tmRNA + S-adenosyl-L-methionine = 5-methyluridine(341) in tmRNA + S-adenosyl-L-homocysteine + H(+). Functionally, dual-specificity methyltransferase that catalyzes the formation of 5-methyluridine at position 54 (m5U54) in all tRNAs, and that of position 341 (m5U341) in tmRNA (transfer-mRNA). In Salmonella newport (strain SL254), this protein is tRNA/tmRNA (uracil-C(5))-methyltransferase.